Reading from the N-terminus, the 172-residue chain is Hemagglutinin/amebocyte aggregation factor (172 aa).

The first 19 residues, 1–19 (MNSPAIVIIIFSTLTFSEA), serve as a signal peptide directing secretion. Repeat copies occupy residues 21 to 25 (VNDWD), 50 to 54 (EDRRW), 73 to 77 (VNDWD), and 102 to 106 (EDRRW). 5 disulfide bridges follow: C32–C58, C67–C172, C84–C110, C111–C117, and C123–C167. 2 consecutive repeat copies span residues 129-133 (VNSWD) and 158-162 (EDRRW).

Belongs to the dermatopontin family.

Its subcellular location is the secreted. Functionally, possesses the property of inducing both aggregation of amebocytes and agglutination of erythrocytes. This is Hemagglutinin/amebocyte aggregation factor from Limulus polyphemus (Atlantic horseshoe crab).